The following is a 632-amino-acid chain: Nucleoside triphosphatase I (632 aa).

Residues 42 to 204 (FLGLDKMHSL…IMLVNLLRPK (163 aa)) form the Helicase ATP-binding domain. 55–62 (HETGVGKT) contributes to the ATP binding site. The short motif at 141–144 (DECH) is the DEXH box element. One can recognise a Helicase C-terminal domain in the interval 367 to 532 (KFTDVCLRIL…EFTQLFKVFK (166 aa)). A binding to the cap-specific mRNA (nucleoside-2'-O-)-methyltransferase region spans residues 457-524 (DIFILDMTWN…DIIRNKSKEF (68 aa)).

This sequence belongs to the helicase family. NPH I subfamily. Monomer. Interacts (via C-terminus) with RAP94 (via N-terminus). Interacts with the cap-specific mRNA (nucleoside-2'-O-)-methyltransferase.

It localises to the virion. It carries out the reaction a ribonucleoside 5'-triphosphate + H2O = a ribonucleoside 5'-diphosphate + phosphate + H(+). Functionally, DNA-dependent ATPase required for providing the needed energy to achieve the termination of early transcripts. Acts in concert with the RAP94 subunit of the virion RNA polymerase and the capping enzyme/VTF to catalyze release of UUUUUNU-containing nascent RNA from the elongation complex. NPH-I must bind ssDNA in order to exhibit ATPase activity. In Rabbit fibroma virus (strain Kasza) (RFV), this protein is Nucleoside triphosphatase I (NPH1).